Consider the following 287-residue polypeptide: Lipoyl synthase (287 aa).

[4Fe-4S] cluster is bound by residues C34, C39, C45, C60, C64, C67, and S273. In terms of domain architecture, Radical SAM core spans 46–262 (WNKRHATVMI…KYIAYSKGFL (217 aa)).

Belongs to the radical SAM superfamily. Lipoyl synthase family. [4Fe-4S] cluster is required as a cofactor.

It is found in the cytoplasm. It carries out the reaction [[Fe-S] cluster scaffold protein carrying a second [4Fe-4S](2+) cluster] + N(6)-octanoyl-L-lysyl-[protein] + 2 oxidized [2Fe-2S]-[ferredoxin] + 2 S-adenosyl-L-methionine + 4 H(+) = [[Fe-S] cluster scaffold protein] + N(6)-[(R)-dihydrolipoyl]-L-lysyl-[protein] + 4 Fe(3+) + 2 hydrogen sulfide + 2 5'-deoxyadenosine + 2 L-methionine + 2 reduced [2Fe-2S]-[ferredoxin]. It functions in the pathway protein modification; protein lipoylation via endogenous pathway; protein N(6)-(lipoyl)lysine from octanoyl-[acyl-carrier-protein]: step 2/2. Catalyzes the radical-mediated insertion of two sulfur atoms into the C-6 and C-8 positions of the octanoyl moiety bound to the lipoyl domains of lipoate-dependent enzymes, thereby converting the octanoylated domains into lipoylated derivatives. This is Lipoyl synthase from Wolbachia pipientis wMel.